Consider the following 50-residue polypeptide: Thrombin-like enzyme BpirSP41 (50 aa).

The Peptidase S1 domain occupies 1 to 50 (VVGGDECDINEHPFLAFLYSHGYFCGLTLINQEWVLTAAHCDRRFMRIYL). The cysteines at positions 25 and 41 are disulfide-linked. H40 acts as the Charge relay system in catalysis.

It belongs to the peptidase S1 family. Snake venom subfamily. In terms of assembly, monomer. N-glycosylated. Expressed by the venom gland.

The protein resides in the secreted. Its activity is regulated as follows. Inhibited by serine protease inhibitors PMSF, benzamidine, leupeptin and aprotinin, as well as by copper ions (Cu2+). Not inhibited by metalloprotease inhibitors EDTA, EGTA and 1,10-phenanthroline, as well as by barium (Ba2+) and calcium ion (Ca2+). In terms of biological role, snake venom serine protease that interferes with the hemostatic system of the prey. It almost completely degrades both Aalpha (FGA) and Bbeta (FGB) chains of fibrinogen. It presents a higher ability to degrade fibrin clots than BpirSP27. It hydrolyzes chromogenic substrates S-2238 (used for testing thrombin activity), S-2222 (factor Xa), S-2266 (glandular kallikrein and factor XIa), and S-2302 (plasma kallikrein, factor XIa and XIIa). It shows a decrease in the clotting time of human plasma in the presence of increasing doses of the enzyme. Its minimum coagulant dose (MCD) is 20 ug. It promotes platelet aggregation with a maximum of aggregation of 20%, regardless of the concentration increase or the presence of calcium. It also shows 40% inhibition of the hemolytic activity promoted by the complement pathways and possess only a minor role in the induction of edema and pain in rat. The protein is Thrombin-like enzyme BpirSP41 of Bothrops pirajai (Piraja's lancehead).